A 496-amino-acid polypeptide reads, in one-letter code: Sugar transporter ERD6 (496 aa).

6 helical membrane-spanning segments follow: residues 58–78 (VFLS…GVGF), 94–114 (VAEY…GAVF), 128–148 (MLFC…AQNA), 156–176 (LLLG…IAEI), 183–203 (GSFV…FFII), and 211–231 (LLTV…FFIP). S256 bears the Phosphoserine mark. 6 helical membrane-spanning segments follow: residues 292–312 (YPLI…SSGV), 329–349 (IGTS…TVLV), 364–384 (AMGL…FGIL), 394–414 (IGVL…PWII), 430–450 (LVTV…NFML), and 456–476 (GMFL…YFLV).

This sequence belongs to the major facilitator superfamily. Sugar transporter (TC 2.A.1.1) family. As to expression, expressed in both shoots and roots. In roots, expressed in epidermal cells and especially strongly in cortex cells. In flowers, expressed in sepals.

Its subcellular location is the membrane. Functionally, sugar transporter. The polypeptide is Sugar transporter ERD6 (ERD6) (Arabidopsis thaliana (Mouse-ear cress)).